A 114-amino-acid polypeptide reads, in one-letter code: Large ribosomal subunit protein uL22 (114 aa).

The protein belongs to the universal ribosomal protein uL22 family. As to quaternary structure, part of the 50S ribosomal subunit.

Functionally, this protein binds specifically to 23S rRNA; its binding is stimulated by other ribosomal proteins, e.g. L4, L17, and L20. It is important during the early stages of 50S assembly. It makes multiple contacts with different domains of the 23S rRNA in the assembled 50S subunit and ribosome. In terms of biological role, the globular domain of the protein is located near the polypeptide exit tunnel on the outside of the subunit, while an extended beta-hairpin is found that lines the wall of the exit tunnel in the center of the 70S ribosome. The protein is Large ribosomal subunit protein uL22 of Bacillus licheniformis (strain ATCC 14580 / DSM 13 / JCM 2505 / CCUG 7422 / NBRC 12200 / NCIMB 9375 / NCTC 10341 / NRRL NRS-1264 / Gibson 46).